Reading from the N-terminus, the 300-residue chain is Forkhead transcription factor fkh-9 (300 aa).

A DNA-binding region (fork-head) is located at residues 66 to 161; the sequence is RPSLSYKDLI…DKQTLRRRNR (96 aa). The disordered stretch occupies residues 153–208; it reads KQTLRRRNRQQPRALAKKSDAGRTLSRDDRGSSGSGETSPSPSQPSISPPNENPMP. A compositionally biased stretch (basic and acidic residues) spans 169–183; that stretch reads KKSDAGRTLSRDDRG. A compositionally biased stretch (low complexity) spans 187–198; the sequence is SGETSPSPSQPS.

Expressed in mechanosensory neurons.

It is found in the nucleus. Transcription factor. Binds to the regulatory elements of genes that contain the sequence motif 5'-TTGTTTCT-3'. Involved in regulating intestinal transcription of vitellogenin vit-2, acting in concert with transcription factors elt-2, mab-3 and daf-16, and also the TGF-beta/Sma/Mab pathway. Functions downstream of the insulin/IGF-1-like signaling (IIS) mediated pathway, in regeneration of axons after injury and in short-term memory, perhaps acting in neurons, and in modulation of longevity, perhaps acting non-neuronally. Plays a role in the modulation of endoplasmic reticulum (ER) homeostasis during chemical and pathogen stress, including exposure to the Gram-negative bacterium P.aeruginosa. This Caenorhabditis elegans protein is Forkhead transcription factor fkh-9.